We begin with the raw amino-acid sequence, 854 residues long: MNKSTSSLDYIEKLPLPAEQAEVLREKLPQAAWNDQAVLHQALSEGSPSEEHQVNVQSEDDATLQSVQARLEMAWAEGLDNGKQLGTDREGRTALKAMPVITRASMFPDVWRTNPLVRWWESLLGRTVPPRPHYSPEEKISENRWRLVGTIRRYILLVLTLFQTAIATWYMKTILPYQGWALIDPFEMAGQPWTRSLMQLLPYVLQSGILVLFAVLFCWVSAGFWTALMGFLQLLIGRDKYSISSTTVGNEPLNPEHRTALIMPICNEDVERVFAGLRATYESVEATGNLEHFDIYVLSDSNDPDICVAEQKAWMELCRDVGGTGRIFYRRRRRRVKRKSGNIDDFCRRWGNQYSYMVILDADSVMSGECLTSLVRLMEANPNAGIIQSSPKASGMDTLYARCQQFATRVYGPLFTAGLHFWQLGESHYWGHNAIIRVKPFIEHCALAPLPGEGSFAGAILSHDFVEAALMRRAGWGVWIAYDLPGSYEELPPNLLDELKRDRRWCHGNLMNFRLFLVKGMHPVHRAVFLTGVMSYLSAPLWFMFLMLSTALQVVHTLMEPQYFLQPRQLFPVWPQWRPELAIALFSTTLVLLFLPKLLSVILVWAKGAKEYGGALRVFISLLLEMLFSVLLAPVRMLFHTVFVVSAFLGWSVQWNSPQRDDDATPWSEAFVRHGSQLILGLVWAIGMAWLDLRFLWWLAPIVFSLILSPFVSVYSSRASLGLGCKRAKLLMIPEEFNPPRELVATDEYCRLNHQRRLDNGFMQAVFDPSINALASAMATARHRFSQAIEDVREKNVRDALNRKPEEVSNNQRLVLLSDPVTISRLHYHVWQKPETYAAWVESYQKLPAPHIKS.

7 helical membrane-spanning segments follow: residues 155-175 (ILLVLTLFQTAIATWYMKTIL), 209-229 (ILVLFAVLFCWVSAGFWTALM), 528-548 (VFLTGVMSYLSAPLWFMFLML), 583-603 (IALFSTTLVLLFLPKLLSVIL), 619-639 (FISLLLEMLFSVLLAPVRMLF), 671-691 (FVRHGSQLILGLVWAIGMAWL), and 695-715 (FLWWLAPIVFSLILSPFVSVY).

Belongs to the glycosyltransferase 2 family. OpgH subfamily.

The protein resides in the cell inner membrane. Its pathway is glycan metabolism; osmoregulated periplasmic glucan (OPG) biosynthesis. Its function is as follows. Involved in the biosynthesis of osmoregulated periplasmic glucans (OPGs). The sequence is that of Glucans biosynthesis glucosyltransferase H from Pectobacterium carotovorum subsp. carotovorum (strain PC1).